The sequence spans 224 residues: Phosphoglycolate phosphatase (224 aa).

The Nucleophile role is filled by D11. Positions 11, 13, and 177 each coordinate Mg(2+).

Belongs to the HAD-like hydrolase superfamily. CbbY/CbbZ/Gph/YieH family. The cofactor is Mg(2+).

The enzyme catalyses 2-phosphoglycolate + H2O = glycolate + phosphate. The protein operates within organic acid metabolism; glycolate biosynthesis; glycolate from 2-phosphoglycolate: step 1/1. Functionally, specifically catalyzes the dephosphorylation of 2-phosphoglycolate. Is involved in the dissimilation of the intracellular 2-phosphoglycolate formed during the DNA repair of 3'-phosphoglycolate ends, a major class of DNA lesions induced by oxidative stress. This chain is Phosphoglycolate phosphatase, found in Mannheimia succiniciproducens (strain KCTC 0769BP / MBEL55E).